The primary structure comprises 172 residues: Calcium channel flower homolog (172 aa).

Residues 1 to 32 (MSSSGGAPGASASSAPPAQEEGMTWWYRWLCR) lie on the Cytoplasmic side of the membrane. A helical membrane pass occupies residues 33–53 (LSGVLGAVSCAISGLFNCITI). Topologically, residues 54 to 57 (HPLN) are extracellular. Residues 58–78 (IAAGVWMIMNAFILLLCEAPF) traverse the membrane as a helical segment. Topologically, residues 79 to 102 (CCQFIEFANTVAEKVDRLRSWQKA) are cytoplasmic. Residues 103–123 (VFYCGMAVVPIVISLTLTTLL) form a helical membrane-spanning segment. The Extracellular segment spans residues 124-125 (GN). A helical membrane pass occupies residues 126 to 142 (AIAFATGVLYGLSALGK). The Cytoplasmic portion of the chain corresponds to 143 to 172 (KGDAISYARIQQQRQQADEEKLAETLEGEL).

It belongs to the calcium channel flower family. Interacts with adaptor protein complex 2 (AP-2). Detected in skin cells at low levels of expression (at protein level).

Its subcellular location is the cell membrane. It localises to the cytoplasmic vesicle. It is found in the secretory vesicle. The protein localises to the synaptic vesicle. The protein resides in the golgi apparatus. Its subcellular location is the vesicle. It localises to the early endosome. It is found in the recycling endosome. The protein localises to the endoplasmic reticulum membrane. In terms of biological role, transmembrane protein which mediates synaptic endocytosis and fitness-based cell culling. In response to different stimulus strengths, controls two major modes of synaptic vesicle (SV) retrieval in hippocampal neurons; Clathrin-mediated endocytosis (CME) in response to mild stimulation and activity-dependent bulk endocytosis (ADBE) in response to strong stimulation. In cytotoxic T-lymphoocytes (CTLs) facilitates calcium-dependent endocytosis of cytotoxic granules at the immuno synapse. Different isoforms work as fitness fingerprints in 'loser' and 'winner' cells and thereby mediate win/lose decisions as part of the cell competition process. Its function is as follows. Functions with the other flower isoforms to produce tissue-specific fitness fingerprints that identify unfit or fit cells during cell selection processes in order to maintain tissue health. During cell competition, if levels of this isoform in cells is higher than in the surrounding neighboring cells, the cells are recognized as 'winner' cells, and do not undergo elimination via apoptosis. Functions with the other flower isoforms to produce tissue-specific fitness fingerprints that identify unfit or fit cells during cell selection processes in order to maintain tissue health. During cell competition, if levels of this isoform in unfit cells is higher than in the surrounding neighboring cells, the cells are recognized as 'loser' cells, and undergo elimination via apoptosis to be replaced by the surrounding healthy 'winner' cell population. This Homo sapiens (Human) protein is Calcium channel flower homolog (CACFD1).